The primary structure comprises 633 residues: Chaperone protein HtpG (633 aa).

The tract at residues 1–341 (MTAPHETMSF…SADLPLNVSR (341 aa)) is a; substrate-binding. The b stretch occupies residues 342-562 (ELLQESRDVK…EGDMSGYLQR (221 aa)). Positions 563 to 633 (LLKQAGQKAP…YVQRVNKLLA (71 aa)) are c.

This sequence belongs to the heat shock protein 90 family. In terms of assembly, homodimer.

It is found in the cytoplasm. Its function is as follows. Molecular chaperone. Has ATPase activity. The polypeptide is Chaperone protein HtpG (Cupriavidus taiwanensis (strain DSM 17343 / BCRC 17206 / CCUG 44338 / CIP 107171 / LMG 19424 / R1) (Ralstonia taiwanensis (strain LMG 19424))).